A 326-amino-acid chain; its full sequence is ATP synthase gamma chain (326 aa).

It belongs to the ATPase gamma chain family. In terms of assembly, F-type ATPases have 2 components, CF(1) - the catalytic core - and CF(0) - the membrane proton channel. CF(1) has five subunits: alpha(3), beta(3), gamma(1), delta(1), epsilon(1). CF(0) has three main subunits: a, b and c.

The protein localises to the cell membrane. Produces ATP from ADP in the presence of a proton gradient across the membrane. The gamma chain is believed to be important in regulating ATPase activity and the flow of protons through the CF(0) complex. The chain is ATP synthase gamma chain from Corynebacterium efficiens (strain DSM 44549 / YS-314 / AJ 12310 / JCM 11189 / NBRC 100395).